The following is a 299-amino-acid chain: Pyrroline-5-carboxylate reductase 2 (299 aa).

It belongs to the pyrroline-5-carboxylate reductase family. In terms of assembly, homodecamer; composed of 5 homodimers.

The enzyme catalyses L-proline + NADP(+) = (S)-1-pyrroline-5-carboxylate + NADPH + 2 H(+). The catalysed reaction is L-proline + NAD(+) = (S)-1-pyrroline-5-carboxylate + NADH + 2 H(+). It participates in amino-acid biosynthesis; L-proline biosynthesis; L-proline from L-glutamate 5-semialdehyde: step 1/1. In Dictyostelium discoideum (Social amoeba), this protein is Pyrroline-5-carboxylate reductase 2 (pycr2).